The primary structure comprises 394 residues: Flap endonuclease 1-A (394 aa).

The interval 1 to 105 (MGIKGLTKLI…RELAKRFARR (105 aa)) is N-domain. Asp-34 provides a ligand contact to Mg(2+). Arg-71 serves as a coordination point for DNA. The Mg(2+) site is built by Asp-87, Glu-159, Glu-161, Asp-180, and Asp-182. The tract at residues 123–254 (DVEKYSKKTV…QTALKMIRQH (132 aa)) is I-domain. Residue Glu-159 coordinates DNA. The DNA site is built by Gly-232 and Asp-234. Asp-234 lines the Mg(2+) pocket. An interaction with PCNA region spans residues 338-346 (SQGRLESFF). Positions 343 to 394 (ESFFGVSSSSSNKRKEAPDSEASAGKQVKTAAAVKPAKAASKKGPAKGGKKK) are disordered. The segment covering 368-381 (KQVKTAAAVKPAKA) has biased composition (low complexity). Basic residues predominate over residues 382–394 (ASKKGPAKGGKKK).

Belongs to the XPG/RAD2 endonuclease family. FEN1 subfamily. As to quaternary structure, interacts with PCNA. Three molecules of FEN1 bind to one PCNA trimer with each molecule binding to one PCNA monomer. PCNA stimulates the nuclease activity without altering cleavage specificity. The cofactor is Mg(2+). Phosphorylated. Phosphorylation upon DNA damage induces relocalization to the nuclear plasma.

The protein localises to the nucleus. It localises to the nucleolus. Its subcellular location is the nucleoplasm. The protein resides in the mitochondrion. Functionally, structure-specific nuclease with 5'-flap endonuclease and 5'-3' exonuclease activities involved in DNA replication and repair. During DNA replication, cleaves the 5'-overhanging flap structure that is generated by displacement synthesis when DNA polymerase encounters the 5'-end of a downstream Okazaki fragment. It enters the flap from the 5'-end and then tracks to cleave the flap base, leaving a nick for ligation. Also involved in the long patch base excision repair (LP-BER) pathway, by cleaving within the apurinic/apyrimidinic (AP) site-terminated flap. Acts as a genome stabilization factor that prevents flaps from equilibrating into structures that lead to duplications and deletions. Also possesses 5'-3' exonuclease activity on nicked or gapped double-stranded DNA, and exhibits RNase H activity. Also involved in replication and repair of rDNA and in repairing mitochondrial DNA. The chain is Flap endonuclease 1-A from Physcomitrium patens (Spreading-leaved earth moss).